Here is a 429-residue protein sequence, read N- to C-terminus: GTPase Obg (429 aa).

The 158-residue stretch at 1-158 (MLIDKCTLFL…IEAQFELKYI (158 aa)) folds into the Obg domain. Residues 159–330 (ADVGLLGLPN…LLKDIFKDYK (172 aa)) enclose the OBG-type G domain. Residues 165–172 (GLPNAGKS), 190–194 (FTTLS), 211–214 (DIPG), 281–284 (NKID), and 311–313 (SGF) contribute to the GTP site. Serine 172 and threonine 192 together coordinate Mg(2+). The region spanning 351-429 (KVEKEQEDIV…RIQDVMFEIN (79 aa)) is the OCT domain.

This sequence belongs to the TRAFAC class OBG-HflX-like GTPase superfamily. OBG GTPase family. Monomer. Mg(2+) is required as a cofactor.

It is found in the cytoplasm. Its function is as follows. An essential GTPase which binds GTP, GDP and possibly (p)ppGpp with moderate affinity, with high nucleotide exchange rates and a fairly low GTP hydrolysis rate. Plays a role in control of the cell cycle, stress response, ribosome biogenesis and in those bacteria that undergo differentiation, in morphogenesis control. This is GTPase Obg from Malacoplasma penetrans (strain HF-2) (Mycoplasma penetrans).